A 149-amino-acid polypeptide reads, in one-letter code: Large ribosomal subunit protein uL24 (149 aa).

This sequence belongs to the universal ribosomal protein uL24 family. As to quaternary structure, part of the 50S ribosomal subunit.

One of two assembly initiator proteins, it binds directly to the 5'-end of the 23S rRNA, where it nucleates assembly of the 50S subunit. Its function is as follows. One of the proteins that surrounds the polypeptide exit tunnel on the outside of the subunit. This is Large ribosomal subunit protein uL24 from Nostoc sp. (strain PCC 7120 / SAG 25.82 / UTEX 2576).